A 154-amino-acid polypeptide reads, in one-letter code: Myoglobin (154 aa).

One can recognise a Globin domain in the interval 2 to 148 (GLSDGEWQLV…FRKDMASNYK (147 aa)). Residue Ser-4 is modified to Phosphoserine. Nitrite is bound at residue His-65. His-65 contributes to the O2 binding site. Phosphothreonine is present on Thr-68. His-94 contacts heme b.

Belongs to the globin family. Monomeric.

Its subcellular location is the cytoplasm. The protein resides in the sarcoplasm. It catalyses the reaction Fe(III)-heme b-[protein] + nitric oxide + H2O = Fe(II)-heme b-[protein] + nitrite + 2 H(+). The enzyme catalyses H2O2 + AH2 = A + 2 H2O. Monomeric heme protein which primary function is to store oxygen and facilitate its diffusion within muscle tissues. Reversibly binds oxygen through a pentacoordinated heme iron and enables its timely and efficient release as needed during periods of heightened demand. Depending on the oxidative conditions of tissues and cells, and in addition to its ability to bind oxygen, it also has a nitrite reductase activity whereby it regulates the production of bioactive nitric oxide. Under stress conditions, like hypoxia and anoxia, it also protects cells against reactive oxygen species thanks to its pseudoperoxidase activity. The polypeptide is Myoglobin (MB) (Pan troglodytes (Chimpanzee)).